The sequence spans 892 residues: Alpha-actinin-1 (892 aa).

At Met1 the chain carries N-acetylmethionine. The interval 1–247 is actin-binding; that stretch reads MDHYDSQQTN…IMTYVSSFYH (247 aa). Position 6 is a phosphoserine (Ser6). Tyr12 carries the post-translational modification Phosphotyrosine; by FAK1. Calponin-homology (CH) domains lie at 31–135 and 144–250; these read KQQR…LRFA and TSAK…HAFS. N6-acetyllysine occurs at positions 95 and 195. 4 Spectrin repeats span residues 274 to 384, 394 to 499, 509 to 620, and 630 to 733; these read QLME…WLLN, HLAE…ALER, QLYL…ALTE, and RLRK…EVEN. The interval 274 to 733 is interaction with DDN; that stretch reads QLMEDYEKLA…IARTINEVEN (460 aa). Ser471 bears the Phosphoserine mark. The residue at position 676 (Lys676) is an N6-acetyllysine. At Ser677 the chain carries Phosphoserine. 2 EF-hand domains span residues 746 to 781 and 787 to 822; these read EQMN…LGYD and QGEA…ETAD. Residues Asp759, Asp761, Ser763, Thr765, and Glu770 each coordinate Ca(2+). A Phosphoserine modification is found at Ser890.

It belongs to the alpha-actinin family. In terms of assembly, homodimer; antiparallel. Interacts with MYOZ2, TTID and LPP. Interacts with DDN. Interacts with PSD. Interacts with MICALL2. Interacts with DNM2 and CTTN. Interacts with PDLIM1. Interacts with PDLIM2. Interacts with PDLIM4 (via PDZ domain). Interacts with IGSF8.

It localises to the cytoplasm. It is found in the cytoskeleton. The protein localises to the myofibril. Its subcellular location is the sarcomere. The protein resides in the z line. It localises to the cell membrane. It is found in the cell junction. The protein localises to the cell projection. Its subcellular location is the ruffle. Its function is as follows. F-actin cross-linking protein which is thought to anchor actin to a variety of intracellular structures. Association with IGSF8 regulates the immune synapse formation and is required for efficient T-cell activation. The polypeptide is Alpha-actinin-1 (ACTN1) (Bos taurus (Bovine)).